Consider the following 572-residue polypeptide: Pentatricopeptide repeat-containing protein At1g26900, mitochondrial (572 aa).

Residues 1 to 117 (MTLAITSRLR…RAFSVFNQLR (117 aa)) constitute a mitochondrion transit peptide. PPR repeat units lie at residues 89–123 (NLFMFNTMIRGYSISDEPERAFSVFNQLRAKGLTL), 124–158 (DRFSFITTLKSCSRELCVSIGEGLHGIALRSGFMV), 159–189 (FTDLRNALIHFYCVCGKISDARKVFDEMPQS), 191–225 (DAVTFSTLMNGYLQVSKKALALDLFRIMRKSEVVV), 226–260 (NVSTLLSFLSAISDLGDLSGAESAHVLCIKIGLDL), 261–291 (DLHLITALIGMYGKTGGISSARRIFDCAIRK), 292–326 (DVVTWNCMIDQYAKTGLLEECVWLLRQMKYEKMKP), 327–361 (NSSTFVGLLSSCAYSEAAFVGRTVADLLEEERIAL), 362–392 (DAILGTALVDMYAKVGLLEKAVEIFNRMKDK), 393–427 (DVKSWTAMISGYGAHGLAREAVTLFNKMEEENCKV), 430–460 (NEITFLVVLNACSHGGLVMEGIRCFKRMVEA), and 466–496 (KVEHYGCVVDLLGRAGQLEEAYELIRNLPIT). A type E motif region spans residues 501 to 572 (AWRALLAACR…EAGYSAIEIE (72 aa)).

The protein belongs to the PPR family. PCMP-E subfamily.

The protein localises to the mitochondrion. The chain is Pentatricopeptide repeat-containing protein At1g26900, mitochondrial (PCMP-E54) from Arabidopsis thaliana (Mouse-ear cress).